We begin with the raw amino-acid sequence, 508 residues long: Phenylalanine--tRNA ligase alpha subunit (508 aa).

The residue at position 2 (Ala-2) is an N-acetylalanine. Thr-190 carries the phosphothreonine modification. Phosphoserine is present on residues Ser-193 and Ser-301. Lys-311 is subject to N6-acetyllysine. L-phenylalanine contacts are provided by residues Thr-329, 372 to 374 (QIE), and Tyr-412. Glu-414 contacts Mg(2+). Residue Phe-438 participates in L-phenylalanine binding.

Belongs to the class-II aminoacyl-tRNA synthetase family. Phe-tRNA synthetase alpha subunit type 2 subfamily. As to quaternary structure, heterotetramer; dimer of two heterodimers formed by FARSA and FARSB. Requires Mg(2+) as cofactor.

It localises to the cytoplasm. It catalyses the reaction tRNA(Phe) + L-phenylalanine + ATP = L-phenylalanyl-tRNA(Phe) + AMP + diphosphate + H(+). This is Phenylalanine--tRNA ligase alpha subunit (FARSA) from Pongo abelii (Sumatran orangutan).